The primary structure comprises 359 residues: RNA-binding protein 4B (359 aa).

RRM domains are found at residues 2–72 (VKLF…ASKN) and 78–148 (TKLH…LSTS). Residues 160–177 (SGCYRCGKEGHWSKECPV) form a CCHC-type zinc finger. The tract at residues 196-359 (AVRPPYTMGY…YVDRARYSAF (164 aa)) is interaction with TNPO3.

Interacts with TNPO3, which may mediate nuclear import of the protein.

The protein resides in the nucleus. It localises to the nucleolus. Functionally, required for the translational activation of PER1 mRNA in response to circadian clock. Binds directly to the 3'-UTR of the PER1 mRNA. This is RNA-binding protein 4B (RBM4B) from Sus scrofa (Pig).